Reading from the N-terminus, the 144-residue chain is UPF0102 protein BMA2801 (144 aa).

A disordered region spans residues methionine 1 to serine 28.

This sequence belongs to the UPF0102 family.

This chain is UPF0102 protein BMA2801, found in Burkholderia mallei (strain ATCC 23344).